An 858-amino-acid chain; its full sequence is Bifunctional uridylyltransferase/uridylyl-removing enzyme (858 aa).

The interval 1–324 (MSAHAAPSPE…PATSGITRVL (324 aa)) is uridylyltransferase. A uridylyl-removing region spans residues 325–681 (SADRFVEKQG…ARPSPIGDAL (357 aa)). The HD domain occupies 443–565 (VDQHILMVLR…VGNERYLTAL (123 aa)). ACT domains follow at residues 682 to 763 (QVLV…PSKG) and 790 to 858 (ILSV…AIAV).

This sequence belongs to the GlnD family. Mg(2+) is required as a cofactor.

It carries out the reaction [protein-PII]-L-tyrosine + UTP = [protein-PII]-uridylyl-L-tyrosine + diphosphate. The catalysed reaction is [protein-PII]-uridylyl-L-tyrosine + H2O = [protein-PII]-L-tyrosine + UMP + H(+). Uridylyltransferase (UTase) activity is inhibited by glutamine, while glutamine activates uridylyl-removing (UR) activity. Functionally, modifies, by uridylylation and deuridylylation, the PII regulatory proteins (GlnB and homologs), in response to the nitrogen status of the cell that GlnD senses through the glutamine level. Under low glutamine levels, catalyzes the conversion of the PII proteins and UTP to PII-UMP and PPi, while under higher glutamine levels, GlnD hydrolyzes PII-UMP to PII and UMP (deuridylylation). Thus, controls uridylylation state and activity of the PII proteins, and plays an important role in the regulation of nitrogen assimilation and metabolism. The chain is Bifunctional uridylyltransferase/uridylyl-removing enzyme from Burkholderia orbicola (strain AU 1054).